We begin with the raw amino-acid sequence, 779 residues long: Angiomotin-like protein 2 (779 aa).

Disordered stretches follow at residues 41–215 (GGAG…QYPH) and 263–308 (QYLQ…TSGS). 2 stretches are compositionally biased toward basic and acidic residues: residues 100–112 (KGEE…EAKA) and 141–152 (RRQDEALRELRH). The required for interaction with CDH5 stretch occupies residues 101–307 (GEELPTYEEA…SAQASSATSG (207 aa)). Tyr107 carries the phosphotyrosine; by FGFR1 modification. Residues 160-169 (ERLLQLSLER) are compositionally biased toward low complexity. Residues 177–193 (HMSSSHSFPQLARNQQG) show a composition bias toward polar residues. The span at 196–213 (LRGPPAEGPESRGPPPQY) shows a compositional bias: pro residues. The interval 220 to 307 (HETTTAVTDP…SAQASSATSG (88 aa)) is required for interaction with CDH1. Low complexity predominate over residues 298 to 308 (SAQASSATSGS). Positions 308 to 581 (SAHLAQMEAV…KYLEERAMRQ (274 aa)) form a coiled coil. Residues Lys347 and Lys408 each participate in a glycyl lysine isopeptide (Lys-Gly) (interchain with G-Cter in ubiquitin) cross-link. Disordered regions lie at residues 522–543 (RAQQ…SPEL) and 679–753 (TQGW…GCSS). A compositionally biased stretch (gly residues) spans 530–539 (APGGSSGSGG). Composition is skewed to polar residues over residues 680–690 (QGWQGLSSSER) and 725–740 (DGST…TSTC). 2 positions are modified to phosphoserine: Ser759 and Ser762. The PDZ-binding motif lies at 776-779 (EILI).

The protein belongs to the angiomotin family. Part of a complex composed of AMOTL2, MAGI1 and CDH5, within the complex AMOTL2 acts as a scaffold protein for the interaction of MAGI1 with CDH5. The complex is required for coupling actin fibers to cell junctions in endothelial cells. Within the complex AMOTL2 (via its N-terminus) interacts with CDH5. Interacts (via N-terminus) with MAGI1. Interacts (via N-terminus) with ACTB; the interaction facilitates binding of cell junction complexes to actin fibers in endothelial cells. Interacts with CDH1; the interaction may facilitate binding of radial actin fibers to cell junction complexes. Interacts with SRC. Interacts with YAP1; the interaction is required for ubiquitination of AMOTL2 and localization of YAP1 to tight junctions. Interacts with WWP1; the interaction facilitates WWP1 interaction with the Crumbs complex and subsequent WWP1 translocation to the plasma membrane. WWP1 interaction with the Crumbs complex promotes WWP1 monoubiquitination of AMOTL2 which subsequently activates the Hippo signaling pathway. When ubiquitinated interacts with LATS2 (via UBA domain); the interaction promotes LATS2 phosphorylation of YAP1. Interacts (via PPXY motif) with WWTR1/TAZ (via WW domain); the interaction promotes WWTR1/TAZ localization to the cytoplasm and thereby inhibition of its transcriptional properties. Interacts with PHLDB2; interaction may facilitate PHLDB2 localization to the myotube podosome cortex that surrounds the core. Post-translationally, monoubiquitinated at Lys-347 and Lys-408 by Crumbs complex-bound WWP1. De-ubiquitinated at Lys-347 and Lys-408 by USP9X; the interaction may be promoted by cell contact inhibition. Deubiquitination of AMOTL2 negatively regulates Hippo signaling activation. Phosphorylation at Tyr-107 is necessary for efficient binding to SRC and synergistically functioning with SRC to activate the downstream MAPK pathway.

The protein resides in the recycling endosome. The protein localises to the cytoplasm. Its subcellular location is the cell projection. It localises to the podosome. It is found in the cell junction. Its function is as follows. Regulates the translocation of phosphorylated SRC to peripheral cell-matrix adhesion sites. Required for proper architecture of actin filaments. Plays a role in coupling actin fibers to cell junctions in endothelial cells and is therefore required for correct endothelial cell morphology via facilitating transcellular transmission of mechanical force resulting in endothelial cell elongation. Required for the anchoring of radial actin fibers to CDH1 junction complexes at the cell membrane which facilitates organization of radial actin fiber structure and cellular response to contractile forces. This contributes to maintenance of cell area, size, shape, epithelial sheet organization and trophectoderm cell properties that facilitate blastocyst zona hatching. Inhibits the Wnt/beta-catenin signaling pathway, probably by recruiting CTNNB1 to recycling endosomes and hence preventing its translocation to the nucleus. Participates in angiogenesis. Activates the Hippo signaling pathway in response to cell contact inhibition via interaction with and ubiquitination by Crumbs complex-bound WWP1. Ubiquitinated AMOTL2 then interacts with LATS2 which in turn phosphorylates YAP1, excluding it from the nucleus and localizing it to the cytoplasm and tight junctions, therefore ultimately repressing YAP1-driven transcription of target genes. Acts to inhibit WWTR1/TAZ transcriptional coactivator activity via sequestering WWTR1/TAZ in the cytoplasm and at tight junctions. Regulates the size and protein composition of the podosome cortex and core at myofibril neuromuscular junctions. Selectively promotes FGF-induced MAPK activation through SRC. May play a role in the polarity, proliferation and migration of endothelial cells. This Homo sapiens (Human) protein is Angiomotin-like protein 2.